The chain runs to 317 residues: Lipase 1 (317 aa).

The first 18 residues, 1 to 18 (MLLKRLCFAALFSLSMVG), serve as a signal peptide directing secretion. Cysteine 19 carries the N-palmitoyl cysteine lipid modification. A lipid anchor (S-diacylglycerol cysteine) is attached at cysteine 19. The 228-residue stretch at 69 to 296 (PLLLIHGFGG…MEDVGHVPMV (228 aa)) folds into the AB hydrolase-1 domain. Histidine 74 is a catalytic residue. Serine 142 functions as the Nucleophile in the catalytic mechanism. Active-site charge relay system residues include glutamate 270 and histidine 292.

The protein resides in the cell outer membrane. It carries out the reaction a triacylglycerol + H2O = a diacylglycerol + a fatty acid + H(+). The polypeptide is Lipase 1 (lip1) (Psychrobacter immobilis).